We begin with the raw amino-acid sequence, 248 residues long: 3-deoxy-manno-octulosonate cytidylyltransferase (248 aa).

The protein belongs to the KdsB family.

It localises to the cytoplasm. It catalyses the reaction 3-deoxy-alpha-D-manno-oct-2-ulosonate + CTP = CMP-3-deoxy-beta-D-manno-octulosonate + diphosphate. It participates in nucleotide-sugar biosynthesis; CMP-3-deoxy-D-manno-octulosonate biosynthesis; CMP-3-deoxy-D-manno-octulosonate from 3-deoxy-D-manno-octulosonate and CTP: step 1/1. The protein operates within bacterial outer membrane biogenesis; lipopolysaccharide biosynthesis. Its function is as follows. Activates KDO (a required 8-carbon sugar) for incorporation into bacterial lipopolysaccharide in Gram-negative bacteria. This Chlorobaculum tepidum (strain ATCC 49652 / DSM 12025 / NBRC 103806 / TLS) (Chlorobium tepidum) protein is 3-deoxy-manno-octulosonate cytidylyltransferase.